Consider the following 181-residue polypeptide: Malignant T-cell-amplified sequence 2 (181 aa).

In terms of domain architecture, PUA spans 92 to 171 (LPHQQVDKGA…IGIENIHYLN (80 aa)).

It belongs to the MCTS1 family.

The protein resides in the cytoplasm. This chain is Malignant T-cell-amplified sequence 2, found in Homo sapiens (Human).